Here is a 188-residue protein sequence, read N- to C-terminus: Elongation factor P (188 aa).

This sequence belongs to the elongation factor P family.

It localises to the cytoplasm. The protein operates within protein biosynthesis; polypeptide chain elongation. In terms of biological role, involved in peptide bond synthesis. Stimulates efficient translation and peptide-bond synthesis on native or reconstituted 70S ribosomes in vitro. Probably functions indirectly by altering the affinity of the ribosome for aminoacyl-tRNA, thus increasing their reactivity as acceptors for peptidyl transferase. The sequence is that of Elongation factor P from Exiguobacterium sp. (strain ATCC BAA-1283 / AT1b).